The following is a 184-amino-acid chain: Gastrokine-1 (184 aa).

The first 20 residues, 1 to 20 (MKLTMFVVGLLGLLAAPGFA), serve as a signal peptide directing secretion. In terms of domain architecture, BRICHOS spans 54 to 148 (NNGWDSWNSL…MCRGIPTYVA (95 aa)). A disulfide bridge connects residues C81 and C140.

This sequence belongs to the gastrokine family. Expressed in the stomach. Highly expressed specifically in surface cells of the antrum mucosa from where it is secreted.

The protein resides in the secreted. It is found in the cytoplasmic granule. The protein localises to the golgi apparatus. Its function is as follows. Has mitogenic activity and may be involved in maintaining the integrity of the gastric mucosal epithelium. This chain is Gastrokine-1 (Gkn1), found in Mus musculus (Mouse).